Consider the following 292-residue polypeptide: ATP synthase gamma chain (292 aa).

This sequence belongs to the ATPase gamma chain family. In terms of assembly, F-type ATPases have 2 components, CF(1) - the catalytic core - and CF(0) - the membrane proton channel. CF(1) has five subunits: alpha(3), beta(3), gamma(1), delta(1), epsilon(1). CF(0) has three main subunits: a, b and c.

The protein resides in the cell inner membrane. Its function is as follows. Produces ATP from ADP in the presence of a proton gradient across the membrane. The gamma chain is believed to be important in regulating ATPase activity and the flow of protons through the CF(0) complex. In Brucella canis (strain ATCC 23365 / NCTC 10854 / RM-666), this protein is ATP synthase gamma chain.